We begin with the raw amino-acid sequence, 486 residues long: uncharacterized protein (486 aa).

Isoleucine 24–alanine 35 provides a ligand contact to NAD(+).

Belongs to the mannitol dehydrogenase family. UxuB subfamily.

This is an uncharacterized protein from Escherichia coli (strain K12).